A 443-amino-acid chain; its full sequence is Proline--tRNA ligase (443 aa).

This sequence belongs to the class-II aminoacyl-tRNA synthetase family. ProS type 2 subfamily. Homodimer.

The protein localises to the cytoplasm. It catalyses the reaction tRNA(Pro) + L-proline + ATP = L-prolyl-tRNA(Pro) + AMP + diphosphate. In terms of biological role, catalyzes the attachment of proline to tRNA(Pro) in a two-step reaction: proline is first activated by ATP to form Pro-AMP and then transferred to the acceptor end of tRNA(Pro). This Zymomonas mobilis subsp. mobilis (strain ATCC 10988 / DSM 424 / LMG 404 / NCIMB 8938 / NRRL B-806 / ZM1) protein is Proline--tRNA ligase.